The following is a 447-amino-acid chain: Trimethylamine monooxygenase (447 aa).

The FAD site is built by S13, E38, Q40, L46, W47, and H63. NADP(+) contacts are provided by W71 and N73. FAD contacts are provided by N73 and V126. Residues Y173, A205, S206, S208, and R229 each coordinate NADP(+). Residues Q318 and T321 each coordinate FAD. NADP(+) is bound at residue R413.

The protein belongs to the FMO family. Requires FAD as cofactor.

It carries out the reaction trimethylamine + NADPH + O2 = trimethylamine N-oxide + NADP(+) + H2O. Functionally, catalyzes the oxidation of trimethylamine (TMA) to produce trimethylamine N-oxide (TMAO). TMA is the best substrate, but the enzyme can also oxidize methimazole, indole and dimethylamine (DMA). The chain is Trimethylamine monooxygenase from Roseovarius nubinhibens (strain ATCC BAA-591 / DSM 15170 / ISM).